Reading from the N-terminus, the 106-residue chain is MMKVLVVVALLLTLIIYSSSDGIDDLEADELVSLMAHEQTRAKACTPRYYDCSHDRHRCCRSSMFKDVCTCFYPEGGHYKEVCTCQQPKHLEYMEKAADKIKNLFG.

An N-terminal signal peptide occupies residues 1–20; sequence MMKVLVVVALLLTLIIYSSS. The propeptide occupies 21–41; that stretch reads DGIDDLEADELVSLMAHEQTR. 4 disulfides stabilise this stretch: cysteine 45–cysteine 60, cysteine 52–cysteine 69, cysteine 59–cysteine 85, and cysteine 71–cysteine 83.

Belongs to the neurotoxin 19 (CSTX) family. 02 (D7) subfamily. In terms of tissue distribution, expressed by the venom gland.

Its subcellular location is the secreted. The protein is Toxin-like structure LSTX-D9 of Lycosa singoriensis (Wolf spider).